Here is a 209-residue protein sequence, read N- to C-terminus: Protein-L-isoaspartate O-methyltransferase (209 aa).

The active site involves serine 55.

It belongs to the methyltransferase superfamily. L-isoaspartyl/D-aspartyl protein methyltransferase family.

Its subcellular location is the cytoplasm. It catalyses the reaction [protein]-L-isoaspartate + S-adenosyl-L-methionine = [protein]-L-isoaspartate alpha-methyl ester + S-adenosyl-L-homocysteine. Functionally, catalyzes the methyl esterification of L-isoaspartyl residues in peptides and proteins that result from spontaneous decomposition of normal L-aspartyl and L-asparaginyl residues. It plays a role in the repair and/or degradation of damaged proteins. In Anaeromyxobacter dehalogenans (strain 2CP-C), this protein is Protein-L-isoaspartate O-methyltransferase.